The sequence spans 231 residues: GTP cyclohydrolase III (231 aa).

This sequence belongs to the archaeal-type GTP cyclohydrolase family.

The catalysed reaction is GTP + 3 H2O = 2-amino-5-formylamino-6-(5-phospho-D-ribosylamino)pyrimidin-4(3H)-one + 2 phosphate + 2 H(+). In terms of biological role, catalyzes the formation of 2-amino-5-formylamino-6-ribofuranosylamino-4(3H)-pyrimidinone ribonucleotide monophosphate and inorganic phosphate from GTP. Also has an independent pyrophosphate phosphohydrolase activity. This Saccharolobus solfataricus (strain ATCC 35092 / DSM 1617 / JCM 11322 / P2) (Sulfolobus solfataricus) protein is GTP cyclohydrolase III.